We begin with the raw amino-acid sequence, 394 residues long: NAD(P)H-quinone oxidoreductase subunit H (394 aa).

Belongs to the complex I 49 kDa subunit family. As to quaternary structure, NDH-1 can be composed of about 15 different subunits; different subcomplexes with different compositions have been identified which probably have different functions.

The protein resides in the cellular thylakoid membrane. It carries out the reaction a plastoquinone + NADH + (n+1) H(+)(in) = a plastoquinol + NAD(+) + n H(+)(out). It catalyses the reaction a plastoquinone + NADPH + (n+1) H(+)(in) = a plastoquinol + NADP(+) + n H(+)(out). Functionally, NDH-1 shuttles electrons from an unknown electron donor, via FMN and iron-sulfur (Fe-S) centers, to quinones in the respiratory and/or the photosynthetic chain. The immediate electron acceptor for the enzyme in this species is believed to be plastoquinone. Couples the redox reaction to proton translocation, and thus conserves the redox energy in a proton gradient. Cyanobacterial NDH-1 also plays a role in inorganic carbon-concentration. This is NAD(P)H-quinone oxidoreductase subunit H from Nostoc punctiforme (strain ATCC 29133 / PCC 73102).